The following is a 244-amino-acid chain: Ribonuclease HII (244 aa).

The region spanning 23 to 236 (KIILGLDEAG…SKKLLKEFEE (214 aa)) is the RNase H type-2 domain. Aspartate 29, glutamate 30, and aspartate 130 together coordinate a divalent metal cation.

It belongs to the RNase HII family. Mn(2+) is required as a cofactor. It depends on Mg(2+) as a cofactor.

The protein resides in the cytoplasm. The enzyme catalyses Endonucleolytic cleavage to 5'-phosphomonoester.. In terms of biological role, endonuclease that specifically degrades the RNA of RNA-DNA hybrids. This is Ribonuclease HII from Methanococcus vannielii (strain ATCC 35089 / DSM 1224 / JCM 13029 / OCM 148 / SB).